Reading from the N-terminus, the 540-residue chain is Chaperonin GroEL 1 (540 aa).

ATP-binding positions include 29-32 (TIGP), 86-90 (DGTTT), G415, 479-481 (NAA), and D495.

Belongs to the chaperonin (HSP60) family. As to quaternary structure, forms a cylinder of 14 subunits composed of two heptameric rings stacked back-to-back. Interacts with the co-chaperonin GroES.

Its subcellular location is the cytoplasm. The enzyme catalyses ATP + H2O + a folded polypeptide = ADP + phosphate + an unfolded polypeptide.. In terms of biological role, together with its co-chaperonin GroES, plays an essential role in assisting protein folding. The GroEL-GroES system forms a nano-cage that allows encapsulation of the non-native substrate proteins and provides a physical environment optimized to promote and accelerate protein folding. The protein is Chaperonin GroEL 1 of Streptomyces albus G.